The primary structure comprises 156 residues: 6,7-dimethyl-8-ribityllumazine synthase (156 aa).

5-amino-6-(D-ribitylamino)uracil is bound by residues Phe22, 57-59 (AYE), and 81-83 (SVI). Residue 86 to 87 (GT) participates in (2S)-2-hydroxy-3-oxobutyl phosphate binding. His89 (proton donor) is an active-site residue. Residue Phe114 participates in 5-amino-6-(D-ribitylamino)uracil binding. A (2S)-2-hydroxy-3-oxobutyl phosphate-binding site is contributed by Arg128.

This sequence belongs to the DMRL synthase family. In terms of assembly, forms an icosahedral capsid composed of 60 subunits, arranged as a dodecamer of pentamers.

The enzyme catalyses (2S)-2-hydroxy-3-oxobutyl phosphate + 5-amino-6-(D-ribitylamino)uracil = 6,7-dimethyl-8-(1-D-ribityl)lumazine + phosphate + 2 H2O + H(+). Its pathway is cofactor biosynthesis; riboflavin biosynthesis; riboflavin from 2-hydroxy-3-oxobutyl phosphate and 5-amino-6-(D-ribitylamino)uracil: step 1/2. Catalyzes the formation of 6,7-dimethyl-8-ribityllumazine by condensation of 5-amino-6-(D-ribitylamino)uracil with 3,4-dihydroxy-2-butanone 4-phosphate. This is the penultimate step in the biosynthesis of riboflavin. This is 6,7-dimethyl-8-ribityllumazine synthase from Photobacterium profundum (strain SS9).